The following is a 369-amino-acid chain: Maltose/maltodextrin import ATP-binding protein MalK (369 aa).

The ABC transporter domain maps to 4 to 234 (VTLHNVSKAY…PVNRFVASFI (231 aa)). Position 36-43 (36-43 (GPSGCGKS)) interacts with ATP.

The protein belongs to the ABC transporter superfamily. Maltooligosaccharide importer (TC 3.A.1.1.1) family. As to quaternary structure, the complex is composed of two ATP-binding proteins (MalK), two transmembrane proteins (MalG and MalK) and a solute-binding protein (MalE).

It localises to the cell inner membrane. The catalysed reaction is D-maltose(out) + ATP + H2O = D-maltose(in) + ADP + phosphate + H(+). In terms of biological role, part of the ABC transporter complex MalEFGK involved in maltose/maltodextrin import. Responsible for energy coupling to the transport system. The sequence is that of Maltose/maltodextrin import ATP-binding protein MalK from Photorhabdus laumondii subsp. laumondii (strain DSM 15139 / CIP 105565 / TT01) (Photorhabdus luminescens subsp. laumondii).